Reading from the N-terminus, the 237-residue chain is tRNA1(Val) (adenine(37)-N6)-methyltransferase (237 aa).

It belongs to the methyltransferase superfamily. tRNA (adenine-N(6)-)-methyltransferase family.

It localises to the cytoplasm. The catalysed reaction is adenosine(37) in tRNA1(Val) + S-adenosyl-L-methionine = N(6)-methyladenosine(37) in tRNA1(Val) + S-adenosyl-L-homocysteine + H(+). Its function is as follows. Specifically methylates the adenine in position 37 of tRNA(1)(Val) (anticodon cmo5UAC). This chain is tRNA1(Val) (adenine(37)-N6)-methyltransferase, found in Tolumonas auensis (strain DSM 9187 / NBRC 110442 / TA 4).